A 259-amino-acid chain; its full sequence is DNA-directed RNA polymerase 30 kDa polypeptide (259 aa).

A TFIIS-type zinc finger spans residues tyrosine 155–lysine 195. Positions 159, 162, 187, and 190 each coordinate Zn(2+). Residues glutamate 220–glutamate 259 form a disordered region. Residues asparagine 226–alanine 236 show a composition bias toward pro residues.

Belongs to the poxviridae DNA-directed RNA polymerase 30 kDa subunit family. As to quaternary structure, the DNA-dependent RNA polymerase (vRNAP) consists of eight subunits encoded by early viral genes and termed according to their apparent molecular masses Rpo147, Rpo132, Rpo35, Rpo30, Rpo22, Rpo19, Rpo18, and Rpo7. The same holoenzyme, with the addition of the transcription-specificity factor RAP94, is used for early gene expression.

The protein resides in the virion. Its subcellular location is the host cytoplasm. It catalyses the reaction RNA(n) + a ribonucleoside 5'-triphosphate = RNA(n+1) + diphosphate. In terms of biological role, part of the DNA-dependent RNA polymerase which catalyzes the transcription of viral DNA into RNA using the four ribonucleoside triphosphates as substrates. Responsible for the transcription of early, intermediate and late genes. DNA-dependent RNA polymerase associates with the early transcription factor (ETF), itself composed of OPG118 and OPG134, thereby allowing the early genes transcription. Late transcription, and probably also intermediate transcription, require newly synthesized RNA polymerase. This chain is DNA-directed RNA polymerase 30 kDa polypeptide (OPG066), found in Variola virus (isolate Human/India/Ind3/1967) (VARV).